The following is a 291-amino-acid chain: Acetylglutamate kinase (291 aa).

Substrate contacts are provided by residues G61 to G62, R83, and N187.

It belongs to the acetylglutamate kinase family. ArgB subfamily.

It localises to the cytoplasm. It catalyses the reaction N-acetyl-L-glutamate + ATP = N-acetyl-L-glutamyl 5-phosphate + ADP. It participates in amino-acid biosynthesis; L-arginine biosynthesis; N(2)-acetyl-L-ornithine from L-glutamate: step 2/4. In terms of biological role, catalyzes the ATP-dependent phosphorylation of N-acetyl-L-glutamate. The polypeptide is Acetylglutamate kinase (Methanoregula boonei (strain DSM 21154 / JCM 14090 / 6A8)).